The chain runs to 437 residues: Elongation factor 1-gamma (437 aa).

Ala-2 carries the post-translational modification N-acetylalanine. Residues 2–87 (AAGTLYTYPE…YVSNEELRGS (86 aa)) enclose the GST N-terminal domain. In terms of domain architecture, GST C-terminal spans 88-216 (TPEAAAQVVQ…VKLCEKMAQF (129 aa)). An N6-acetyllysine mark is found at Lys-147 and Lys-212. The span at 221-254 (FAESQPKKDTPRKEKGSREEKQKPQTERKEEKKA) shows a compositional bias: basic and acidic residues. The tract at residues 221–268 (FAESQPKKDTPRKEKGSREEKQKPQTERKEEKKAAAPAPEEEMDECEQ) is disordered. Lys-253 is covalently cross-linked (Glycyl lysine isopeptide (Lys-Gly) (interchain with G-Cter in SUMO1)). An EF-1-gamma C-terminal domain is found at 276–437 (AKDPFAHLPK…KAVNQGKIFK (162 aa)). Lys-285 is covalently cross-linked (Glycyl lysine isopeptide (Lys-Gly) (interchain with G-Cter in SUMO2)). Lys-401 bears the N6-acetyllysine mark. The residue at position 434 (Lys-434) is an N6-acetyllysine; alternate. Lys-434 bears the N6-malonyllysine; alternate mark.

EF-1 is composed of four subunits: alpha, beta, delta, and gamma.

In terms of biological role, probably plays a role in anchoring the complex to other cellular components. In Rattus norvegicus (Rat), this protein is Elongation factor 1-gamma (Eef1g).